The following is a 221-amino-acid chain: Ribosomal RNA large subunit methyltransferase E (221 aa).

Positions 60, 62, 89, 105, and 134 each coordinate S-adenosyl-L-methionine. The active-site Proton acceptor is Lys-174.

The protein belongs to the class I-like SAM-binding methyltransferase superfamily. RNA methyltransferase RlmE family.

It is found in the cytoplasm. The catalysed reaction is uridine(2552) in 23S rRNA + S-adenosyl-L-methionine = 2'-O-methyluridine(2552) in 23S rRNA + S-adenosyl-L-homocysteine + H(+). Its function is as follows. Specifically methylates the uridine in position 2552 of 23S rRNA at the 2'-O position of the ribose in the fully assembled 50S ribosomal subunit. The sequence is that of Ribosomal RNA large subunit methyltransferase E from Cupriavidus metallidurans (strain ATCC 43123 / DSM 2839 / NBRC 102507 / CH34) (Ralstonia metallidurans).